The chain runs to 333 residues: Probable siderophore transport system permease protein YfiZ (333 aa).

Positions 1 to 31 (MICKKASSKWIVLVCLIFILLTAVCASVVYG) are cleaved as a signal peptide. The next 8 membrane-spanning stretches (helical) occupy residues 64–84 (ALVA…MQAL), 94–114 (IFGI…FLHI), 119–139 (ALVW…YAAG), 152–172 (TLAG…LLSV), 193–213 (LDLL…CFFL), 246–266 (VMLA…GIII), 280–300 (WVLP…DIGA), and 303–323 (IIMP…MPVF).

It belongs to the binding-protein-dependent transport system permease family. FecCD subfamily. In terms of assembly, the complex is composed of one ATP-binding protein (YusV), two transmembrane proteins (YfiZ and YfhA) and a solute-binding protein (YfiY).

It localises to the cell membrane. Functionally, part of the ABC transporter complex YfiYZ/YfhA/YusV involved in import of the iron-hydroxamate siderophores schizokinen, arthrobactin and corprogen. In Bacillus subtilis (strain 168), this protein is Probable siderophore transport system permease protein YfiZ (yfiZ).